We begin with the raw amino-acid sequence, 212 residues long: MFITFEGIEGCGKSTQIALLAASLQQAGQRVLLTREPGGCPIADQIRSVLLDAANTALVPMAELMLYAASRAQHLAEVVSPALAEGVIVLCDRFSDATRAYQSFGRGIDRQVIETLNSLACDGISPDLTVLLDCPVETGLGRARQRIDSTSGPREERFELESLAFHQRVRDGYLQLAAEEPGRFVIVDATVQPAQVASAISDAVLSRLAVPV.

Position 7 to 14 (7 to 14) interacts with ATP; sequence GIEGCGKS.

It belongs to the thymidylate kinase family.

The catalysed reaction is dTMP + ATP = dTDP + ADP. Phosphorylation of dTMP to form dTDP in both de novo and salvage pathways of dTTP synthesis. The chain is Thymidylate kinase from Trichlorobacter lovleyi (strain ATCC BAA-1151 / DSM 17278 / SZ) (Geobacter lovleyi).